We begin with the raw amino-acid sequence, 344 residues long: tRNA N6-adenosine threonylcarbamoyltransferase (344 aa).

2 residues coordinate Fe cation: H114 and H118. Residues 136–140, D170, G183, D187, and N278 contribute to the substrate site; that span reads LVSGG. Residue D306 coordinates Fe cation.

Belongs to the KAE1 / TsaD family. Requires Fe(2+) as cofactor.

It is found in the cytoplasm. It catalyses the reaction L-threonylcarbamoyladenylate + adenosine(37) in tRNA = N(6)-L-threonylcarbamoyladenosine(37) in tRNA + AMP + H(+). Functionally, required for the formation of a threonylcarbamoyl group on adenosine at position 37 (t(6)A37) in tRNAs that read codons beginning with adenine. Is involved in the transfer of the threonylcarbamoyl moiety of threonylcarbamoyl-AMP (TC-AMP) to the N6 group of A37, together with TsaE and TsaB. TsaD likely plays a direct catalytic role in this reaction. This chain is tRNA N6-adenosine threonylcarbamoyltransferase, found in Mycobacteroides abscessus (strain ATCC 19977 / DSM 44196 / CCUG 20993 / CIP 104536 / JCM 13569 / NCTC 13031 / TMC 1543 / L948) (Mycobacterium abscessus).